Reading from the N-terminus, the 220-residue chain is Ribosomal RNA small subunit methyltransferase Nep1 (220 aa).

S-adenosyl-L-methionine contacts are provided by residues Gly178, Gly183, and 196–201; that span reads LYREPL.

Belongs to the class IV-like SAM-binding methyltransferase superfamily. RNA methyltransferase NEP1 family. In terms of assembly, homodimer.

The enzyme catalyses a pseudouridine in rRNA + S-adenosyl-L-methionine = an N(1)-methylpseudouridine in rRNA + S-adenosyl-L-homocysteine + H(+). In terms of biological role, methyltransferase involved in ribosomal biogenesis. Specifically catalyzes the N1-methylation of the pseudouridine corresponding to position 914 in M.jannaschii 16S rRNA. The polypeptide is Ribosomal RNA small subunit methyltransferase Nep1 (Thermococcus kodakarensis (strain ATCC BAA-918 / JCM 12380 / KOD1) (Pyrococcus kodakaraensis (strain KOD1))).